The following is a 252-amino-acid chain: MQIIPAIDLLQGSCVRLHQGDYDQVTRFSEDPVAQALEWQRQGASRLHLVDLDGARSGEPTNDSAVRAITAALSIPVQLGGGVRSLERAEALLSFGLDRVILGTVALEQPELVEQLAARYPGRIVVGIDARNGKVATRGWITDTDTEATSLAKRFEGLGLAAIVSTDIATDGTLAGPNLTALRAMVEASSTPVIASGGIGTVSDLLSLLPVGVSGVIVGRALYDGTVILSEALQAVGDGRLQDASSSQSSPC.

Asp8 functions as the Proton acceptor in the catalytic mechanism. The active-site Proton donor is Asp129.

Belongs to the HisA/HisF family.

Its subcellular location is the cytoplasm. The enzyme catalyses 1-(5-phospho-beta-D-ribosyl)-5-[(5-phospho-beta-D-ribosylamino)methylideneamino]imidazole-4-carboxamide = 5-[(5-phospho-1-deoxy-D-ribulos-1-ylimino)methylamino]-1-(5-phospho-beta-D-ribosyl)imidazole-4-carboxamide. Its pathway is amino-acid biosynthesis; L-histidine biosynthesis; L-histidine from 5-phospho-alpha-D-ribose 1-diphosphate: step 4/9. This is 1-(5-phosphoribosyl)-5-[(5-phosphoribosylamino)methylideneamino] imidazole-4-carboxamide isomerase from Synechococcus sp. (strain RCC307).